We begin with the raw amino-acid sequence, 506 residues long: Serine/threonine-protein kinase D6PKL1 (506 aa).

The disordered stretch occupies residues 1 to 96 (MASKYGSGVL…TCSSFSGNNK (96 aa)). Positions 12-23 (ENKKEKGDKETP) are enriched in basic and acidic residues. Over residues 24–54 (ETSYSSQSVSVNTLADQVSSTLSFAPSSDSK) the composition is skewed to polar residues. Over residues 55–67 (TGGEVKFNEKSDQ) the composition is skewed to basic and acidic residues. A compositionally biased stretch (low complexity) spans 77–92 (STSSDISDESTCSSFS). The region spanning 123–456 (FRLLKRLGCG…ATEMKQHPFF (334 aa)) is the Protein kinase domain. ATP contacts are provided by residues 129 to 137 (LGCGDIGTV) and Lys152. The active-site Proton acceptor is Asp248. The interval 475 to 495 (PVDYESAPATPAAATSTSVKS) is disordered. Over residues 480–492 (SAPATPAAATSTS) the composition is skewed to low complexity.

The protein belongs to the protein kinase superfamily. AGC Ser/Thr protein kinase family.

It is found in the cell membrane. It carries out the reaction L-seryl-[protein] + ATP = O-phospho-L-seryl-[protein] + ADP + H(+). It catalyses the reaction L-threonyl-[protein] + ATP = O-phospho-L-threonyl-[protein] + ADP + H(+). Functionally, protein kinase that regulates the auxin transport activity of PIN auxin efflux facilitators by direct phosphorylation. D6PK-mediated PIN phosphorylation promotes auxin transport in the hypocotyl and this is a prerequisite for PHOT1-dependent hypocotyl bending. This is Serine/threonine-protein kinase D6PKL1 (D6PKL1) from Arabidopsis thaliana (Mouse-ear cress).